Reading from the N-terminus, the 216-residue chain is Redox-sensing transcriptional repressor Rex (216 aa).

Residues 15–54 (KYLRVTQQLIEEGRDAVSSKELGDFTGINPVQVRRDLNAI) constitute a DNA-binding region (H-T-H motif). NAD(+) is bound at residue 89–94 (GAGNLG).

The protein belongs to the transcriptional regulatory Rex family. Homodimer.

Its subcellular location is the cytoplasm. Modulates transcription in response to changes in cellular NADH/NAD(+) redox state. The polypeptide is Redox-sensing transcriptional repressor Rex (Rubrobacter xylanophilus (strain DSM 9941 / JCM 11954 / NBRC 16129 / PRD-1)).